We begin with the raw amino-acid sequence, 187 residues long: Orotate phosphoribosyltransferase (187 aa).

110–118 (EDVVTTGGS) contacts 5-phospho-alpha-D-ribose 1-diphosphate. Positions 114 and 142 each coordinate orotate.

The protein belongs to the purine/pyrimidine phosphoribosyltransferase family. PyrE subfamily. In terms of assembly, homodimer. Mg(2+) serves as cofactor.

The catalysed reaction is orotidine 5'-phosphate + diphosphate = orotate + 5-phospho-alpha-D-ribose 1-diphosphate. The protein operates within pyrimidine metabolism; UMP biosynthesis via de novo pathway; UMP from orotate: step 1/2. Its function is as follows. Catalyzes the transfer of a ribosyl phosphate group from 5-phosphoribose 1-diphosphate to orotate, leading to the formation of orotidine monophosphate (OMP). This chain is Orotate phosphoribosyltransferase, found in Thermotoga neapolitana (strain ATCC 49049 / DSM 4359 / NBRC 107923 / NS-E).